A 173-amino-acid polypeptide reads, in one-letter code: MPRSQNKDNFLDKAFTKMAEGIVKVMPIDSKEKEAYLYYRKGLAAQNDGDYSEALEYYEESLKLEDNQVDRGETLKNMAIIYMSNGDEERALNTYKKALGQNPKQPSCLKNMGLIYEKRGRMAQRNGNQDECDIWFDQAAEVWSKAVRLYPGGYLDIENWLKTTGRGNVDVYL.

3 TPR repeats span residues 35–68, 72–105, and 120–153; these read AYLY…EDNQ, GETL…NPKQ, and GRMA…YPGG.

This sequence belongs to the Ycf3 family.

The protein resides in the cellular thylakoid membrane. Its function is as follows. Essential for the assembly of the photosystem I (PSI) complex. May act as a chaperone-like factor to guide the assembly of the PSI subunits. The polypeptide is Photosystem I assembly protein Ycf3 (Prochlorococcus marinus (strain NATL1A)).